Here is a 291-residue protein sequence, read N- to C-terminus: ATP synthase gamma chain (291 aa).

The protein belongs to the ATPase gamma chain family. F-type ATPases have 2 components, CF(1) - the catalytic core - and CF(0) - the membrane proton channel. CF(1) has five subunits: alpha(3), beta(3), gamma(1), delta(1), epsilon(1). CF(0) has three main subunits: a, b and c.

Its subcellular location is the cell inner membrane. Produces ATP from ADP in the presence of a proton gradient across the membrane. The gamma chain is believed to be important in regulating ATPase activity and the flow of protons through the CF(0) complex. This is ATP synthase gamma chain from Caulobacter vibrioides (strain NA1000 / CB15N) (Caulobacter crescentus).